The following is a 297-amino-acid chain: Ribosomal RNA small subunit methyltransferase A (297 aa).

Positions 31, 33, 58, 79, 104, and 129 each coordinate S-adenosyl-L-methionine.

This sequence belongs to the class I-like SAM-binding methyltransferase superfamily. rRNA adenine N(6)-methyltransferase family. RsmA subfamily.

The protein localises to the cytoplasm. It carries out the reaction adenosine(1518)/adenosine(1519) in 16S rRNA + 4 S-adenosyl-L-methionine = N(6)-dimethyladenosine(1518)/N(6)-dimethyladenosine(1519) in 16S rRNA + 4 S-adenosyl-L-homocysteine + 4 H(+). Its function is as follows. Specifically dimethylates two adjacent adenosines (A1518 and A1519) in the loop of a conserved hairpin near the 3'-end of 16S rRNA in the 30S particle. May play a critical role in biogenesis of 30S subunits. The protein is Ribosomal RNA small subunit methyltransferase A of Staphylococcus aureus (strain Mu3 / ATCC 700698).